A 336-amino-acid chain; its full sequence is Aspartate--ammonia ligase (336 aa).

This sequence belongs to the class-II aminoacyl-tRNA synthetase family. AsnA subfamily.

It localises to the cytoplasm. It carries out the reaction L-aspartate + NH4(+) + ATP = L-asparagine + AMP + diphosphate + H(+). It functions in the pathway amino-acid biosynthesis; L-asparagine biosynthesis; L-asparagine from L-aspartate (ammonia route): step 1/1. This is Aspartate--ammonia ligase from Clostridium perfringens (strain SM101 / Type A).